A 486-amino-acid chain; its full sequence is Glutamyl-tRNA(Gln) amidotransferase subunit A (486 aa).

Active-site charge relay system residues include lysine 77 and serine 152. Residue serine 176 is the Acyl-ester intermediate of the active site.

This sequence belongs to the amidase family. GatA subfamily. Heterotrimer of A, B and C subunits.

It catalyses the reaction L-glutamyl-tRNA(Gln) + L-glutamine + ATP + H2O = L-glutaminyl-tRNA(Gln) + L-glutamate + ADP + phosphate + H(+). Allows the formation of correctly charged Gln-tRNA(Gln) through the transamidation of misacylated Glu-tRNA(Gln) in organisms which lack glutaminyl-tRNA synthetase. The reaction takes place in the presence of glutamine and ATP through an activated gamma-phospho-Glu-tRNA(Gln). The protein is Glutamyl-tRNA(Gln) amidotransferase subunit A of Lactococcus lactis subsp. cremoris (strain SK11).